The primary structure comprises 236 residues: Large ribosomal subunit protein uL1 (236 aa).

This sequence belongs to the universal ribosomal protein uL1 family. As to quaternary structure, part of the 50S ribosomal subunit.

Functionally, binds directly to 23S rRNA. The L1 stalk is quite mobile in the ribosome, and is involved in E site tRNA release. Protein L1 is also a translational repressor protein, it controls the translation of the L11 operon by binding to its mRNA. This chain is Large ribosomal subunit protein uL1, found in Acidobacterium capsulatum (strain ATCC 51196 / DSM 11244 / BCRC 80197 / JCM 7670 / NBRC 15755 / NCIMB 13165 / 161).